We begin with the raw amino-acid sequence, 261 residues long: Succinate dehydrogenase iron-sulfur subunit (261 aa).

In terms of domain architecture, 2Fe-2S ferredoxin-type spans 28–119 (RKVKVYRYDP…DIKIYPLPHM (92 aa)). The [2Fe-2S] cluster site is built by Cys80, Cys85, and Cys100. The 31-residue stretch at 161 to 191 (DREKLDGLYECILCACCSTSCPSYWWNGDKY) folds into the 4Fe-4S ferredoxin-type domain. [4Fe-4S] cluster-binding residues include Cys171, Cys174, and Cys177. Cys181 is a binding site for [3Fe-4S] cluster. Trp186 is a binding site for a ubiquinone. Positions 228 and 234 each coordinate [3Fe-4S] cluster. Cys238 provides a ligand contact to [4Fe-4S] cluster.

Belongs to the succinate dehydrogenase/fumarate reductase iron-sulfur protein family. As to quaternary structure, part of an enzyme complex containing four subunits: a flavoprotein, an iron-sulfur, cytochrome b-556, and a hydrophobic anchor protein. Requires [2Fe-2S] cluster as cofactor. [3Fe-4S] cluster serves as cofactor. The cofactor is [4Fe-4S] cluster.

The catalysed reaction is a quinone + succinate = fumarate + a quinol. It functions in the pathway carbohydrate metabolism; tricarboxylic acid cycle; fumarate from succinate (bacterial route): step 1/1. The chain is Succinate dehydrogenase iron-sulfur subunit (sdhB) from Rickettsia prowazekii (strain Madrid E).